The sequence spans 198 residues: MAHYISLFVRAVFVENMALAFFLGMCTFLAVSKKVSTASGLGVAVTVVLGLAVPINNLVYNLVLRDGALVEGVDLSFLNFITFIGVIAALVQILEMILDKYFPALYNALGIFLPLIAVNCAIFGGVSFMVQRDYNFPESIVYGFGSGIGWMLAIVAMAGIREKMKYANVPAGLRGLGITFITTGLMALGFMSFSGVQL.

6 consecutive transmembrane segments (helical) span residues 11–31 (AVFVENMALAFFLGMCTFLAV), 35–55 (VSTASGLGVAVTVVLGLAVPI), 77–97 (FLNFITFIGVIAALVQILEMI), 110–130 (GIFLPLIAVNCAIFGGVSFMV), 140–160 (IVYGFGSGIGWMLAIVAMAGI), and 176–196 (LGITFITTGLMALGFMSFSGV).

It belongs to the NqrDE/RnfAE family. In terms of assembly, composed of six subunits; NqrA, NqrB, NqrC, NqrD, NqrE and NqrF.

The protein resides in the cell inner membrane. The catalysed reaction is a ubiquinone + n Na(+)(in) + NADH + H(+) = a ubiquinol + n Na(+)(out) + NAD(+). In terms of biological role, NQR complex catalyzes the reduction of ubiquinone-1 to ubiquinol by two successive reactions, coupled with the transport of Na(+) ions from the cytoplasm to the periplasm. NqrA to NqrE are probably involved in the second step, the conversion of ubisemiquinone to ubiquinol. The chain is Na(+)-translocating NADH-quinone reductase subunit E from Klebsiella pneumoniae subsp. pneumoniae (strain ATCC 700721 / MGH 78578).